A 151-amino-acid polypeptide reads, in one-letter code: Putative pre-16S rRNA nuclease (151 aa).

The protein belongs to the YqgF nuclease family.

Its subcellular location is the cytoplasm. In terms of biological role, could be a nuclease involved in processing of the 5'-end of pre-16S rRNA. The sequence is that of Putative pre-16S rRNA nuclease from Chlamydia pneumoniae (Chlamydophila pneumoniae).